The sequence spans 182 residues: Plasmolipin (182 aa).

The Cytoplasmic segment spans residues methionine 1–serine 35. Residue serine 9 is modified to Phosphoserine. An MARVEL domain is found at phenylalanine 32 to arginine 166. The chain crosses the membrane as a helical span at residues alanine 36–alanine 56. Residues aspartate 57–tryptophan 68 lie on the Extracellular side of the membrane. Residues valine 69–phenylalanine 89 form a helical membrane-spanning segment. Residues glutamine 90–proline 99 lie on the Cytoplasmic side of the membrane. A helical membrane pass occupies residues tryptophan 100–isoleucine 120. Topologically, residues alanine 121–serine 141 are extracellular. Residues alanine 142 to phenylalanine 162 form a helical membrane-spanning segment. Topologically, residues glutamine 163–serine 182 are cytoplasmic.

This sequence belongs to the MAL family. As to quaternary structure, forms oligomers. Post-translationally, phosphorylated.

It is found in the membrane. Its subcellular location is the cell membrane. It localises to the myelin membrane. The protein localises to the apical cell membrane. In terms of biological role, main component of the myelin sheath that plays an important role in myelin membrane biogenesis and myelination. Plays an essential function in apical endocytosis. Regulates epithelial development through the regulation of apical endocytosis. Part of the intracellular machinery that mediates basolateral-to-apical transport of ICAM-1, an essential adhesion receptor in epithelial cells, from the subapical compartment in hepatic epithelial cells. The polypeptide is Plasmolipin (Pllp) (Mus musculus (Mouse)).